The sequence spans 278 residues: MKNWRLNNVTPSAFEKTGPIPRSITKTFEKFKKELDPNSESEVIEEFRVSRYQTAASIKYLLLLITVPLIVNQISKSFVFSPFVDYFWNDNQNDIFLNESQEERAFSELQRFEEKIHFEILIGQSPPLSQESIDKEIKHKAVELAQYYVQESTDAMKNLLADVLAFVTFVYLIVTGRRQISVLKSFVNELIYGLSDTAKAFLIILFTDIFVGFHSTHGWEVVLENGLRHFGLPENRDLIFLFIATFPVVLDTVFKYWIFRYLNQVSPSAVATYKDMNE.

Transmembrane regions (helical) follow at residues 60–80 (YLLL…SFVF), 155–175 (AMKN…LIVT), 201–221 (FLII…GWEV), and 239–259 (IFLF…YWIF).

It belongs to the CemA family.

It localises to the plastid. The protein resides in the chloroplast inner membrane. The catalysed reaction is K(+)(in) + H(+)(out) = K(+)(out) + H(+)(in). Contributes to K(+)/H(+) antiport activity by supporting proton efflux to control proton extrusion and homeostasis in chloroplasts in a light-dependent manner to modulate photosynthesis. Prevents excessive induction of non-photochemical quenching (NPQ) under continuous-light conditions. Indirectly promotes efficient inorganic carbon uptake into chloroplasts. The chain is Potassium/proton antiporter CemA from Rhodomonas salina (Cryptomonas salina).